Consider the following 443-residue polypeptide: MFLAQEIIRKKRNGLALSAEEIQFFVKGITTNAVSEGQIAALGMAVYFNDMNMDERIALTTAMRDSGTVLNWQSLGLNGPVIDKHSTGGVGDVISLMLGPMAAACGGYVPMISGRGLGHTGGTLDKFDAIPGYQTEPSSELFRKVVKDVGVAIIGQTGDLVPADKRFYSIRDNTATVESISLITASILSKKLACSLDALAMDVKVGSGAFMPTYEASEELARSIAAVANGAGTKTTALLTDMNQVLASCAGNAVEVKEAIDFLTGAYRNPRLYAVTMGLCAEMLLLGGLATDEADARAKLNRVLDNGRAAEIFGKMVSGLGGPVDFVENYSKYLPQSQIIRPVFADTQGYAHSMDTRELGLAVVTLGGGRRKPGDALDYSVGLTQVCALGDKIDASTPIAVIHAQSEDAFAQAEEAVKKAIRIDEVAPEKTPEIYAYIRAADL.

Belongs to the thymidine/pyrimidine-nucleoside phosphorylase family. In terms of assembly, homodimer.

It carries out the reaction thymidine + phosphate = 2-deoxy-alpha-D-ribose 1-phosphate + thymine. The protein operates within pyrimidine metabolism; dTMP biosynthesis via salvage pathway; dTMP from thymine: step 1/2. In terms of biological role, the enzymes which catalyze the reversible phosphorolysis of pyrimidine nucleosides are involved in the degradation of these compounds and in their utilization as carbon and energy sources, or in the rescue of pyrimidine bases for nucleotide synthesis. The polypeptide is Thymidine phosphorylase (Shewanella sp. (strain MR-4)).